A 105-amino-acid polypeptide reads, in one-letter code: Small ribosomal subunit protein uS10 (105 aa).

The protein belongs to the universal ribosomal protein uS10 family. Part of the 30S ribosomal subunit.

Its function is as follows. Involved in the binding of tRNA to the ribosomes. The protein is Small ribosomal subunit protein uS10 of Rickettsia felis (strain ATCC VR-1525 / URRWXCal2) (Rickettsia azadi).